The sequence spans 485 residues: Argininosuccinate lyase (485 aa).

The protein belongs to the lyase 1 family. Argininosuccinate lyase subfamily.

It localises to the cytoplasm. It catalyses the reaction 2-(N(omega)-L-arginino)succinate = fumarate + L-arginine. It functions in the pathway amino-acid biosynthesis; L-arginine biosynthesis; L-arginine from L-ornithine and carbamoyl phosphate: step 3/3. The protein is Argininosuccinate lyase of Nitrosopumilus maritimus (strain SCM1).